A 206-amino-acid polypeptide reads, in one-letter code: Sclerostin domain-containing protein 1 (206 aa).

Positions 1 to 23 (MLPPAIHFYLLPLACILMKSCLA) are cleaved as a signal peptide. Residue N47 is glycosylated (N-linked (GlcNAc...) asparagine). Intrachain disulfides connect C75–C133, C89–C147, C100–C163, and C104–C165. The region spanning 75–170 (CRELRSTKYI…TACKCKRYTR (96 aa)) is the CTCK domain. N-linked (GlcNAc...) asparagine glycosylation is present at N173. A disordered region spans residues 174-206 (ESSHNFESMSPAKPVQHHRERKRASKSSKHSMS). Positions 188-206 (VQHHRERKRASKSSKHSMS) are enriched in basic residues.

Belongs to the sclerostin family. In terms of assembly, interacts with BMP2, BMP4, BMP6 and BMP7 with high affinity. In terms of tissue distribution, highly expressed in kidney and weakly in lung.

The protein resides in the secreted. Functionally, may be involved in the onset of endometrial receptivity for implantation/sensitization for the decidual cell reaction Enhances Wnt signaling and inhibits TGF-beta signaling. Directly antagonizes activity of BMP2, BMP4, BMP6 and BMP7 in a dose-dependent manner. The polypeptide is Sclerostin domain-containing protein 1 (SOSTDC1) (Homo sapiens (Human)).